Here is a 261-residue protein sequence, read N- to C-terminus: Maspardin (261 aa).

Positions 87-159 (FCDGFRKLLD…NSFWLMPAFM (73 aa)) constitute an AB hydrolase-1 domain. The residue at position 257 (Ser257) is a Phosphoserine.

Belongs to the AB hydrolase superfamily. As to quaternary structure, interacts with CD4. Interacts with ALDH16A1.

The protein localises to the cytoplasm. Functionally, may play a role as a negative regulatory factor in CD4-dependent T-cell activation. The polypeptide is Maspardin (Spg21) (Rattus norvegicus (Rat)).